Consider the following 220-residue polypeptide: Putative glutathione S-transferase C1183.02 (220 aa).

Residues 2–81 (FLGTLYSFKT…YFYEKGKHND (80 aa)) enclose the GST N-terminal domain. The region spanning 89 to 216 (NEVEEAEMLK…FPLELPLTVT (128 aa)) is the GST C-terminal domain.

Belongs to the GST superfamily.

Its subcellular location is the cytoplasm. The catalysed reaction is RX + glutathione = an S-substituted glutathione + a halide anion + H(+). Its function is as follows. Involved in the oxidative stress response and detoxification. The polypeptide is Putative glutathione S-transferase C1183.02 (Schizosaccharomyces pombe (strain 972 / ATCC 24843) (Fission yeast)).